Reading from the N-terminus, the 361-residue chain is Phosphoserine aminotransferase (361 aa).

Arg42 serves as a coordination point for L-glutamate. Pyridoxal 5'-phosphate is bound by residues 76–77, Trp102, Thr152, Asp172, and Gln195; that span reads AS. Lys196 is modified (N6-(pyridoxal phosphate)lysine). Residue 237–238 coordinates pyridoxal 5'-phosphate; sequence NT.

It belongs to the class-V pyridoxal-phosphate-dependent aminotransferase family. SerC subfamily. In terms of assembly, homodimer. Requires pyridoxal 5'-phosphate as cofactor.

It is found in the cytoplasm. The enzyme catalyses O-phospho-L-serine + 2-oxoglutarate = 3-phosphooxypyruvate + L-glutamate. It carries out the reaction 4-(phosphooxy)-L-threonine + 2-oxoglutarate = (R)-3-hydroxy-2-oxo-4-phosphooxybutanoate + L-glutamate. It functions in the pathway amino-acid biosynthesis; L-serine biosynthesis; L-serine from 3-phospho-D-glycerate: step 2/3. In terms of biological role, catalyzes the reversible conversion of 3-phosphohydroxypyruvate to phosphoserine and of 3-hydroxy-2-oxo-4-phosphonooxybutanoate to phosphohydroxythreonine. This is Phosphoserine aminotransferase from Halalkalibacterium halodurans (strain ATCC BAA-125 / DSM 18197 / FERM 7344 / JCM 9153 / C-125) (Bacillus halodurans).